We begin with the raw amino-acid sequence, 86 residues long: MNLSLINIGFGNVVSANRIISIVSPESAPIKRIITVARDNNKLVDATYGRRTRAVIITDSDHVVLSAVQPETVGQRVISNDEISDE.

This sequence belongs to the RemA family.

This chain is Putative regulatory protein OB1501, found in Oceanobacillus iheyensis (strain DSM 14371 / CIP 107618 / JCM 11309 / KCTC 3954 / HTE831).